A 614-amino-acid chain; its full sequence is Phosphomethylpyrimidine synthase (614 aa).

Substrate contacts are provided by residues Asn226, Met255, Tyr284, His320, 340-342, 381-384, and Glu420; these read SRG and DGLR. His424 lines the Zn(2+) pocket. Tyr447 contacts substrate. His488 provides a ligand contact to Zn(2+). [4Fe-4S] cluster contacts are provided by Cys568, Cys571, and Cys576.

The protein belongs to the ThiC family. In terms of assembly, homodimer. [4Fe-4S] cluster is required as a cofactor.

It catalyses the reaction 5-amino-1-(5-phospho-beta-D-ribosyl)imidazole + S-adenosyl-L-methionine = 4-amino-2-methyl-5-(phosphooxymethyl)pyrimidine + CO + 5'-deoxyadenosine + formate + L-methionine + 3 H(+). It functions in the pathway cofactor biosynthesis; thiamine diphosphate biosynthesis. Catalyzes the synthesis of the hydroxymethylpyrimidine phosphate (HMP-P) moiety of thiamine from aminoimidazole ribotide (AIR) in a radical S-adenosyl-L-methionine (SAM)-dependent reaction. This chain is Phosphomethylpyrimidine synthase, found in Acidovorax ebreus (strain TPSY) (Diaphorobacter sp. (strain TPSY)).